The chain runs to 315 residues: Ribosome biogenesis protein BRX1 homolog 1 (315 aa).

Residues Met-1–Lys-35 form a disordered region. The span at Ser-19–Lys-35 shows a compositional bias: basic and acidic residues. The region spanning Glu-53–Gly-256 is the Brix domain.

Belongs to the BRX1 family. As to expression, expressed in roots, rosette leaves, stems, flowers, siliques and seeds.

The protein resides in the nucleus. Its subcellular location is the nucleolus. Functionally, involved in pre-rRNA processing and required for biogenesis of the large (60S) ribosomal subunit. Required for proper development. The sequence is that of Ribosome biogenesis protein BRX1 homolog 1 from Arabidopsis thaliana (Mouse-ear cress).